Reading from the N-terminus, the 174-residue chain is Co-chaperone protein HscB homolog (174 aa).

Positions 2 to 74 constitute a J domain; sequence NYFELFSLLP…IQRAEHLLTL (73 aa).

The protein belongs to the HscB family. As to quaternary structure, interacts with HscA and stimulates its ATPase activity.

Its function is as follows. Co-chaperone involved in the maturation of iron-sulfur cluster-containing proteins. Seems to help targeting proteins to be folded toward HscA. This Shewanella halifaxensis (strain HAW-EB4) protein is Co-chaperone protein HscB homolog.